A 246-amino-acid polypeptide reads, in one-letter code: uncharacterized protein (246 aa).

This is an uncharacterized protein from Campylobacter jejuni subsp. jejuni serotype O:2 (strain ATCC 700819 / NCTC 11168).